A 60-amino-acid chain; its full sequence is Large ribosomal subunit protein uL30 (60 aa).

It belongs to the universal ribosomal protein uL30 family. Part of the 50S ribosomal subunit.

The sequence is that of Large ribosomal subunit protein uL30 from Bacillus cereus (strain G9842).